Consider the following 387-residue polypeptide: MAAPPAPQPPSLLGYHRVLSPLAGIRVSPLCLGTMHFGGQWTRAMGDVTKETAFALLDRFYEAGGNFIDTANFYQGEGSEKWLGEWVASRGNRDELVLATKYTMSYRLTGPEKIKSNFQGSHSKSLRLSVEASLAKLRTDYIDLLYVHMWDFSTSVEEVMQSLHHLVAAGKVLNIGISDAPAWVVAKCNEYARFHGLTRFCVYQGRWACSYRDFEREILPMCQSEGLALAPWGALGRGQYKSAEEFQQEGTRNMGPQEEKHRLMGAKLTEVGERKGVAAAAIALAYLLHKSPYVFPVIGCRTVEQLEANITSLGVELSDEEIYEIEDTIPFDVGFPMAFLFESPQQKYRSDMTTRHIWQVTCNARIESVPKPRPIEPKQGYKQMDRK.

Residue Asp-69 coordinates NADP(+). Tyr-74 (proton donor) is an active-site residue. His-148 is a substrate binding site. Residues Ser-178–Asp-179, Gln-204, Gly-233–Ala-243, and Arg-301–Asn-309 each bind NADP(+).

The protein belongs to the aldo/keto reductase family. Aldo/keto reductase 2 subfamily.

It participates in mycotoxin biosynthesis; sterigmatocystin biosynthesis. Its function is as follows. Norsolorinic acid reductase; part of the gene cluster that mediates the biosynthesis of sterigmatocystin (ST), a polyketide-derived furanocoumarin which is part of the most toxic and carcinogenic compounds among the known mycotoxins. The first step in the biosynthesis of sterigmatocystin is the production of hexanoate by the fatty acid synthase (FAS) units stcJ and stcK. The polyketide backbone is assembled by the non-reducing polyketide synthase stcA by condensation of the starter hexanoyl-CoA and 7 malonyl-CoA extender units followed by cyclization and release of norsolorinic acid. Norsolorinic acid is the first stable intermediate in the biosynthesis of sterigmatocystin and is converted into averantin (AVN) by the ketoreductase stcE which reduces the hexanoate ketone to an alcohol. Averantin is then oxidized into 5'-hydroxyaverantin (HAVN) by the cytochrome P450 monooxygenase stcF. 5'-hydroxyaverantin is further converted to 5'-oxyaverantin (OAVN) by the 5'-hydroxyaverantin dehydrogenase stcG. The next step is the conversion of OAVN into averufin (AVF) which is catalyzed by a yet to be identified enzyme. The cytochrome P450 monooxygenase stcB and the flavin-binding monooxygenase stcW are both required for the conversion of averufin to 1-hydroxyversicolorone. The esterase stcI probably catalyzes the formation of versiconal hemiacetal acetate from 1-hydroxyversicolorone. The oxydoreductase stcN then probably catalyzes the biosynthetic step from versiconal to versicolorin B (VERB). The next step is performed by the versicolorin B desaturase stcL to produce versicolorin A (VERA). The ketoreductase stcU and the cytochrome P450 monooxygenase stcS are involved in the conversion of versicolorin A to demethylsterigmatocystin. The Baeyer-Villiger oxidas stcQ and the reductase stcR might be involved in the biosynthetic step from versicolorin A to demethylsterigmatocystin. The final step in the biosynthesis of sterigmatocystin is the methylation of demethylsterigmatocystin catalyzed by the methyltransferase stcP. The polypeptide is Norsolorinic acid reductase stcV (Emericella nidulans (strain FGSC A4 / ATCC 38163 / CBS 112.46 / NRRL 194 / M139) (Aspergillus nidulans)).